Reading from the N-terminus, the 366-residue chain is Bacteriochlorophyll a protein (366 aa).

Residues His111, His146, His290, His297, and His298 each contribute to the bacteriochlorophyll a site.

As to quaternary structure, homotrimer. Each subunit contains 7 molecules of bacteriochlorophyll a.

In terms of biological role, intermediary in the transfer of excitation energy from the chlorophyll to the reaction centers. In Chlorobaculum tepidum (strain ATCC 49652 / DSM 12025 / NBRC 103806 / TLS) (Chlorobium tepidum), this protein is Bacteriochlorophyll a protein (fmoA).